The following is a 716-amino-acid chain: Delta-1-pyrroline-5-carboxylate synthase 1 (716 aa).

The tract at residues 1–296 is glutamate 5-kinase; the sequence is MASVDPSRSF…WESSKDVSTR (296 aa). Substrate is bound by residues Ser60, Asp157, and Asn176. Residues 196-197, 202-207, and 236-242 contribute to the ATP site; these read SD, YSGPPS, and RGGMTAK. The gamma-glutamyl phosphate reductase stretch occupies residues 297–716; it reads EMAVAARDCS…VYTHKSLPLQ (420 aa).

It in the N-terminal section; belongs to the glutamate 5-kinase family. This sequence in the C-terminal section; belongs to the gamma-glutamyl phosphate reductase family. Expressed at high levels in leaves.

The enzyme catalyses L-glutamate + ATP = L-glutamyl 5-phosphate + ADP. The catalysed reaction is L-glutamate 5-semialdehyde + phosphate + NADP(+) = L-glutamyl 5-phosphate + NADPH + H(+). It functions in the pathway amino-acid biosynthesis; L-proline biosynthesis; L-glutamate 5-semialdehyde from L-glutamate: step 1/2. It participates in amino-acid biosynthesis; L-proline biosynthesis; L-glutamate 5-semialdehyde from L-glutamate: step 2/2. Its activity is regulated as follows. Feedback regulated by proline. Functionally, P5CS plays a key role in proline biosynthesis, leading to osmoregulation in plants. Involved in abiotic stress tolerance. The protein is Delta-1-pyrroline-5-carboxylate synthase 1 of Oryza sativa subsp. japonica (Rice).